The following is a 427-amino-acid chain: Enolase (427 aa).

A (2R)-2-phosphoglycerate-binding site is contributed by Gln-163. The active-site Proton donor is the Glu-205. Residues Asp-242, Glu-285, and Asp-312 each coordinate Mg(2+). The (2R)-2-phosphoglycerate site is built by Lys-337, Arg-366, Ser-367, and Lys-388. Residue Lys-337 is the Proton acceptor of the active site.

The protein belongs to the enolase family. Requires Mg(2+) as cofactor.

Its subcellular location is the cytoplasm. The protein localises to the secreted. The protein resides in the cell surface. The catalysed reaction is (2R)-2-phosphoglycerate = phosphoenolpyruvate + H2O. The protein operates within carbohydrate degradation; glycolysis; pyruvate from D-glyceraldehyde 3-phosphate: step 4/5. In terms of biological role, catalyzes the reversible conversion of 2-phosphoglycerate (2-PG) into phosphoenolpyruvate (PEP). It is essential for the degradation of carbohydrates via glycolysis. The sequence is that of Enolase from Paraburkholderia xenovorans (strain LB400).